Consider the following 382-residue polypeptide: Pyrimidine monooxygenase RutA (382 aa).

FMN contacts are provided by residues 68-69 (IK), Asn134, Glu143, 159-160 (RY), and Ser209.

The protein belongs to the NtaA/SnaA/DszA monooxygenase family. RutA subfamily.

It catalyses the reaction uracil + FMNH2 + NADH + O2 = (Z)-3-ureidoacrylate + FMN + NAD(+) + H2O + H(+). It carries out the reaction thymine + FMNH2 + NADH + O2 = (Z)-2-methylureidoacrylate + FMN + NAD(+) + H2O + H(+). Its function is as follows. Catalyzes the pyrimidine ring opening between N-3 and C-4 by an unusual flavin hydroperoxide-catalyzed mechanism, adding oxygen atoms in the process to yield ureidoacrylate peracid, that immediately reacts with FMN forming ureidoacrylate and FMN-N(5)-oxide. The FMN-N(5)-oxide reacts spontaneously with NADH to produce FMN. Requires the flavin reductase RutF to regenerate FMN in vivo. The protein is Pyrimidine monooxygenase RutA of Escherichia coli O45:K1 (strain S88 / ExPEC).